The sequence spans 476 residues: Ribulose bisphosphate carboxylase large chain (476 aa).

Residues 1–2 constitute a propeptide that is removed on maturation; sequence MS. Proline 3 carries the N-acetylproline modification. Residue lysine 14 is modified to N6,N6,N6-trimethyllysine. Substrate-binding residues include asparagine 123 and threonine 173. Catalysis depends on lysine 175, which acts as the Proton acceptor. Residue lysine 177 coordinates substrate. Mg(2+) contacts are provided by lysine 201, aspartate 203, and glutamate 204. At lysine 201 the chain carries N6-carboxylysine. The active-site Proton acceptor is the histidine 294. Substrate contacts are provided by arginine 295, histidine 327, and serine 379.

The protein belongs to the RuBisCO large chain family. Type I subfamily. As to quaternary structure, heterohexadecamer of 8 large chains and 8 small chains; disulfide-linked. The disulfide link is formed within the large subunit homodimers. It depends on Mg(2+) as a cofactor. Post-translationally, the disulfide bond which can form in the large chain dimeric partners within the hexadecamer appears to be associated with oxidative stress and protein turnover.

Its subcellular location is the plastid. The protein resides in the chloroplast. The catalysed reaction is 2 (2R)-3-phosphoglycerate + 2 H(+) = D-ribulose 1,5-bisphosphate + CO2 + H2O. It carries out the reaction D-ribulose 1,5-bisphosphate + O2 = 2-phosphoglycolate + (2R)-3-phosphoglycerate + 2 H(+). Its function is as follows. RuBisCO catalyzes two reactions: the carboxylation of D-ribulose 1,5-bisphosphate, the primary event in carbon dioxide fixation, as well as the oxidative fragmentation of the pentose substrate in the photorespiration process. Both reactions occur simultaneously and in competition at the same active site. The protein is Ribulose bisphosphate carboxylase large chain of Phaseolus vulgaris (Kidney bean).